Reading from the N-terminus, the 606-residue chain is NADH-ubiquinone oxidoreductase chain 5 (606 aa).

16 consecutive transmembrane segments (helical) span residues 1 to 21, 43 to 63, 88 to 108, 117 to 137, 140 to 160, 171 to 191, 209 to 229, 241 to 261, 273 to 293, 310 to 330, 366 to 386, 413 to 433, 457 to 477, 488 to 508, 513 to 533, and 582 to 602; these read MNLF…PIIM, AFII…EAII, IFIP…MWYM, FFKY…ANNL, LFIG…WWYG, AILY…WFLT, LNIP…QFGL, TPVS…FLLI, MQTL…ICAL, LGLM…LHIC, MPFT…MPFL, LIAT…VLLG, LLIG…PTTI, LTAL…NLAA, FMYP…PIVM, and GLVK…LILL.

The protein belongs to the complex I subunit 5 family. Core subunit of respiratory chain NADH dehydrogenase (Complex I) which is composed of 45 different subunits.

It is found in the mitochondrion inner membrane. The catalysed reaction is a ubiquinone + NADH + 5 H(+)(in) = a ubiquinol + NAD(+) + 4 H(+)(out). Its function is as follows. Core subunit of the mitochondrial membrane respiratory chain NADH dehydrogenase (Complex I) which catalyzes electron transfer from NADH through the respiratory chain, using ubiquinone as an electron acceptor. Essential for the catalytic activity and assembly of complex I. The polypeptide is NADH-ubiquinone oxidoreductase chain 5 (MT-ND5) (Felis catus (Cat)).